A 335-amino-acid chain; its full sequence is NADP(+)-dependent glycerol-3-phosphate dehydrogenase (335 aa).

Gly137 is a sn-glycerol 3-phosphate binding site. Residue Ala141 coordinates NADPH. Sn-glycerol 3-phosphate-binding residues include Lys192, Asp250, Arg259, and Asn260. Lys192 acts as the Proton acceptor in catalysis. Arg259 is an NADPH binding site. NADPH contacts are provided by Val287 and Glu289.

The protein belongs to the NAD-dependent glycerol-3-phosphate dehydrogenase family. As to quaternary structure, homodimer.

It is found in the cytoplasm. It catalyses the reaction sn-glycerol 3-phosphate + NADP(+) = dihydroxyacetone phosphate + NADPH + H(+). Catalyzes the reduction of the glycolytic intermediate dihydroxyacetone phosphate (DHAP) to sn-glycerol 3-phosphate (G3P). Shows a 15-fold preference for NADPH over NADH in the reduction process. Can also catalyze the reverse reaction in vitro. Shows no activity with dihydroxyacetone, glycerol, glycerol-2-phosphate, D-glyceraldehyde-3-phosphate, DL-glyceraldehyde, D-erythrose-4-phosphate, D-fructose-6-phosphate, beta-D-glucose-6-phosphate, or alpha-D-galactose-1-phosphate. This is NADP(+)-dependent glycerol-3-phosphate dehydrogenase from Archaeoglobus fulgidus (strain ATCC 49558 / DSM 4304 / JCM 9628 / NBRC 100126 / VC-16).